A 526-amino-acid chain; its full sequence is Microphthalmia-associated transcription factor (526 aa).

Residue serine 5 is modified to Phosphoserine; by MTOR. Disordered regions lie at residues 20-54 (EPKT…STMT) and 155-179 (VLSS…SAPN). Low complexity predominate over residues 34-44 (SSSSAEHSGAS). Serine 180 carries the post-translational modification Phosphoserine; by MAPK. The interval 224–291 (DDVIDDIISL…PANLPNIKRE (68 aa)) is transactivation. Residue serine 280 is modified to Phosphoserine. Lysine 289 participates in a covalent cross-link: Glycyl lysine isopeptide (Lys-Gly) (interchain with G-Cter in SUMO). The bHLH domain maps to 311 to 364 (QKKDNHNLIERRRRFNINDRIKELGTLIPKSNDPDMRWNKGTILKASVDYIRKL). Positions 355–401 (KASVDYIRKLQREQQRAKDLENRQKKLEHANRHLLLRVQELEMQARA) form a coiled coil. The tract at residues 374-395 (LENRQKKLEHANRHLLLRVQEL) is leucine-zipper. Residues 401 to 431 (AHGLSLIPSTGLCSPDLVNRIIKQEPVLENC) are DNA-binding regulation. The residue at position 405 (serine 405) is a Phosphoserine; by GSK3. Serine 414 bears the Phosphoserine mark. Lysine 423 participates in a covalent cross-link: Glycyl lysine isopeptide (Lys-Gly) (interchain with G-Cter in SUMO). Residue serine 491 is modified to Phosphoserine. The tract at residues 496–526 (TDPLLSSVSPGASKTSSRRSSMSAEETEHAC) is disordered. Residues 507-519 (ASKTSSRRSSMSA) are compositionally biased toward low complexity. Serine 516 is subject to Phosphoserine; by RPS6KA1.

The protein belongs to the MiT/TFE family. Homodimer or heterodimer; dimerization is mediated via the coiled coil region. Efficient DNA binding requires dimerization with another bHLH protein. Binds DNA in the form of homodimer or heterodimer with either TFE3, TFEB or TFEC. Interacts with small GTPases Rag (RagA/RRAGA, RagB/RRAGB, RagC/RRAGC and/or RagD/RRAGD); promoting its recruitment to lysosomal membrane in the presence of nutrients. Interacts with KARS1. Identified in a complex with HINT1 and CTNNB1. Interacts with VSX2. When nutrients are present, phosphorylation by MTOR at Ser-5 via non-canonical mTORC1 pathway promotes ubiquitination by the SCF(BTRC) complex, followed by degradation. Phosphorylation at Ser-405 significantly enhances the ability to bind the tyrosinase promoter. Phosphorylation by MARK3/cTAK1 at Ser-280 promotes association with 14-3-3/YWHA adapters and retention in the cytosol. Phosphorylated at Ser-180 and Ser-516 following KIT signaling, triggering a short live activation: Phosphorylation at Ser-180 and Ser-516 by MAPK and RPS6KA1, respectively, activate the transcription factor activity but also promote ubiquitination and subsequent degradation by the proteasome. Phosphorylated in response to blue light (415nm). In terms of processing, ubiquitinated by the SCF(BTRC) and SCF(FBXW11) complexes following phosphorylation ar Ser-5 by MTOR, leading to its degradation by the proteasome. Ubiquitinated following phosphorylation at Ser-180, leading to subsequent degradation by the proteasome. Deubiquitinated by USP13, preventing its degradation. As to expression, in the adult, expressed at high levels in the heart, skin, skeletal muscle, intestine, stomach, kidney, ovary, lung, spleen and brain. In the embryo, expressed in developing eye, ear, skin and heart. Isoform M is expressed in melanocytes and also in the embryonic and adult heart while isoform A and isoform H are more widely expressed.

It is found in the nucleus. The protein resides in the cytoplasm. The protein localises to the lysosome membrane. Functionally, transcription factor that acts as a master regulator of melanocyte survival and differentiation as well as melanosome biogenesis. Binds to M-boxes (5'-TCATGTG-3') and symmetrical DNA sequences (E-boxes) (5'-CACGTG-3') found in the promoter of pigmentation genes, such as tyrosinase (TYR). Involved in the cellular response to amino acid availability by acting downstream of MTOR: in the presence of nutrients, MITF phosphorylation by MTOR promotes its inactivation. Upon starvation or lysosomal stress, inhibition of MTOR induces MITF dephosphorylation, resulting in transcription factor activity. Plays an important role in melanocyte development by regulating the expression of tyrosinase (TYR) and tyrosinase-related protein 1 (TYRP1). Plays a critical role in the differentiation of various cell types, such as neural crest-derived melanocytes, mast cells, osteoclasts and optic cup-derived retinal pigment epithelium. This is Microphthalmia-associated transcription factor (Mitf) from Mus musculus (Mouse).